A 217-amino-acid chain; its full sequence is MTEHDLFDLAPYIDHTQLDPLATRADIERCCGEAEQWKFAAVCVMPVWVKTAVQLLHRTPVKVCTVIGFPSGAHTSSTKLYEAQEAVDSGATELDVVINLGWLKEGNSEAVYRDIAQICAETGVTVKAILETTVLTEEEKQLAVDICLDAGVAFLKTSTGWRGGATVADVRLLKRLSRDRVGIKASGGIRTREQALELINAGATRLGTSRSLDLMQV.

D95 (proton donor/acceptor) is an active-site residue. The active-site Schiff-base intermediate with acetaldehyde is K156. The active-site Proton donor/acceptor is K184.

It belongs to the DeoC/FbaB aldolase family. DeoC type 1 subfamily.

The protein localises to the cytoplasm. It catalyses the reaction 2-deoxy-D-ribose 5-phosphate = D-glyceraldehyde 3-phosphate + acetaldehyde. It functions in the pathway carbohydrate degradation; 2-deoxy-D-ribose 1-phosphate degradation; D-glyceraldehyde 3-phosphate and acetaldehyde from 2-deoxy-alpha-D-ribose 1-phosphate: step 2/2. In terms of biological role, catalyzes a reversible aldol reaction between acetaldehyde and D-glyceraldehyde 3-phosphate to generate 2-deoxy-D-ribose 5-phosphate. This chain is Deoxyribose-phosphate aldolase, found in Thermosynechococcus vestitus (strain NIES-2133 / IAM M-273 / BP-1).